Consider the following 82-residue polypeptide: Putative membrane protein insertion efficiency factor (82 aa).

The disordered stretch occupies residues Pro63–Lys82.

It belongs to the UPF0161 family.

It is found in the cell inner membrane. In terms of biological role, could be involved in insertion of integral membrane proteins into the membrane. This chain is Putative membrane protein insertion efficiency factor, found in Protochlamydia amoebophila (strain UWE25).